A 23-amino-acid chain; its full sequence is Thymidine phosphorylase (23 aa).

The protein belongs to the thymidine/pyrimidine-nucleoside phosphorylase family. As to quaternary structure, homodimer.

The catalysed reaction is thymidine + phosphate = 2-deoxy-alpha-D-ribose 1-phosphate + thymine. Its function is as follows. The enzymes which catalyze the reversible phosphorolysis of pyrimidine nucleosides are involved in the degradation of these compounds and in their utilization as carbon and energy sources, or in the rescue of pyrimidine bases for nucleotide synthesis. The sequence is that of Thymidine phosphorylase (deoA) from Lacticaseibacillus rhamnosus (Lactobacillus rhamnosus).